Here is a 353-residue protein sequence, read N- to C-terminus: Sulfate/thiosulfate import ATP-binding protein CysA (353 aa).

The ABC transporter domain maps to I3–L237. G35–T42 serves as a coordination point for ATP.

Belongs to the ABC transporter superfamily. Sulfate/tungstate importer (TC 3.A.1.6) family. As to quaternary structure, the complex is composed of two ATP-binding proteins (CysA), two transmembrane proteins (CysT and CysW) and a solute-binding protein (CysP).

The protein resides in the cell inner membrane. It catalyses the reaction sulfate(out) + ATP + H2O = sulfate(in) + ADP + phosphate + H(+). It carries out the reaction thiosulfate(out) + ATP + H2O = thiosulfate(in) + ADP + phosphate + H(+). In terms of biological role, part of the ABC transporter complex CysAWTP involved in sulfate/thiosulfate import. Responsible for energy coupling to the transport system. This Acinetobacter baylyi (strain ATCC 33305 / BD413 / ADP1) protein is Sulfate/thiosulfate import ATP-binding protein CysA.